The primary structure comprises 125 residues: UPF0231 protein HD_1708 (125 aa).

It belongs to the UPF0231 family.

This is UPF0231 protein HD_1708 from Haemophilus ducreyi (strain 35000HP / ATCC 700724).